Here is a 251-residue protein sequence, read N- to C-terminus: Phosphate import ATP-binding protein PstB (251 aa).

Residues I5–L246 enclose the ABC transporter domain. Residue G37–T44 coordinates ATP.

The protein belongs to the ABC transporter superfamily. Phosphate importer (TC 3.A.1.7) family. In terms of assembly, the complex is composed of two ATP-binding proteins (PstB), two transmembrane proteins (PstC and PstA) and a solute-binding protein (PstS).

The protein resides in the cell inner membrane. The enzyme catalyses phosphate(out) + ATP + H2O = ADP + 2 phosphate(in) + H(+). In terms of biological role, part of the ABC transporter complex PstSACB involved in phosphate import. Responsible for energy coupling to the transport system. This chain is Phosphate import ATP-binding protein PstB, found in Thermotoga maritima (strain ATCC 43589 / DSM 3109 / JCM 10099 / NBRC 100826 / MSB8).